The primary structure comprises 461 residues: ATP-dependent protease ATPase subunit HslU (461 aa).

Residues Ile18, Gly60–Glu65, Asp274, Glu339, and Arg411 contribute to the ATP site.

Belongs to the ClpX chaperone family. HslU subfamily. As to quaternary structure, a double ring-shaped homohexamer of HslV is capped on each side by a ring-shaped HslU homohexamer. The assembly of the HslU/HslV complex is dependent on binding of ATP.

The protein localises to the cytoplasm. Its function is as follows. ATPase subunit of a proteasome-like degradation complex; this subunit has chaperone activity. The binding of ATP and its subsequent hydrolysis by HslU are essential for unfolding of protein substrates subsequently hydrolyzed by HslV. HslU recognizes the N-terminal part of its protein substrates and unfolds these before they are guided to HslV for hydrolysis. This is ATP-dependent protease ATPase subunit HslU from Carboxydothermus hydrogenoformans (strain ATCC BAA-161 / DSM 6008 / Z-2901).